The sequence spans 302 residues: Ribosomal RNA small subunit methyltransferase H (302 aa).

Residues 32 to 34 (GGH), Asp-51, Phe-78, Asp-97, and Gln-104 contribute to the S-adenosyl-L-methionine site.

The protein belongs to the methyltransferase superfamily. RsmH family.

It localises to the cytoplasm. The enzyme catalyses cytidine(1402) in 16S rRNA + S-adenosyl-L-methionine = N(4)-methylcytidine(1402) in 16S rRNA + S-adenosyl-L-homocysteine + H(+). Functionally, specifically methylates the N4 position of cytidine in position 1402 (C1402) of 16S rRNA. In Nitratiruptor sp. (strain SB155-2), this protein is Ribosomal RNA small subunit methyltransferase H.